A 509-amino-acid polypeptide reads, in one-letter code: Cytochrome P450 4A10 (509 aa).

Helical transmembrane passes span 11–31 (FTGS…LLLL) and 121–141 (LLAP…WFQH). A heme-binding site is contributed by Glu-320. Position 439 is a phosphoserine (Ser-439). Residue Cys-456 coordinates heme.

Belongs to the cytochrome P450 family. It depends on heme as a cofactor. Expressed in liver (at protein level) and kidney (at protein level).

The protein localises to the endoplasmic reticulum membrane. It is found in the microsome membrane. It carries out the reaction an omega-methyl-long-chain fatty acid + reduced [NADPH--hemoprotein reductase] + O2 = an omega-hydroxy-long-chain fatty acid + oxidized [NADPH--hemoprotein reductase] + H2O + H(+). It catalyses the reaction dodecanoate + reduced [NADPH--hemoprotein reductase] + O2 = 12-hydroxydodecanoate + oxidized [NADPH--hemoprotein reductase] + H2O + H(+). The catalysed reaction is dodecanoate + reduced [NADPH--hemoprotein reductase] + O2 = 11-hydroxydodecanoate + oxidized [NADPH--hemoprotein reductase] + H2O + H(+). The enzyme catalyses tetradecanoate + reduced [NADPH--hemoprotein reductase] + O2 = 14-hydroxytetradecanoate + oxidized [NADPH--hemoprotein reductase] + H2O + H(+). It carries out the reaction hexadecanoate + reduced [NADPH--hemoprotein reductase] + O2 = 16-hydroxyhexadecanoate + oxidized [NADPH--hemoprotein reductase] + H2O + H(+). It catalyses the reaction (9Z)-octadecenoate + reduced [NADPH--hemoprotein reductase] + O2 = 18-hydroxy-(9Z)-octadecenoate + oxidized [NADPH--hemoprotein reductase] + H2O + H(+). The catalysed reaction is (9Z,12Z)-octadecadienoate + reduced [NADPH--hemoprotein reductase] + O2 = 18-hydroxy-(9Z,12Z)-octadecadienoate + oxidized [NADPH--hemoprotein reductase] + H2O + H(+). The enzyme catalyses (9Z,12Z)-octadecadienoate + reduced [NADPH--hemoprotein reductase] + O2 = 17-hydroxy-(9Z,12Z)-octadecadienoate + oxidized [NADPH--hemoprotein reductase] + H2O + H(+). It carries out the reaction (5Z,8Z,11Z,14Z)-eicosatetraenoate + reduced [NADPH--hemoprotein reductase] + O2 = 20-hydroxy-(5Z,8Z,11Z,14Z)-eicosatetraenoate + oxidized [NADPH--hemoprotein reductase] + H2O + H(+). It catalyses the reaction 8,9-epoxy-(5Z,11Z,14Z)-eicosatrienoate + reduced [NADPH--hemoprotein reductase] + O2 = 20-hydroxy-8,9-epoxy-(5Z,11Z,14Z)-eicosatrienoate + oxidized [NADPH--hemoprotein reductase] + H2O + H(+). In terms of biological role, a cytochrome P450 monooxygenase involved in the metabolism of fatty acids. Catalyzes predominantly the oxidation of the terminal carbon (omega-oxidation) of long-chain fatty acids. Acts as a major omega-hydroxylase for dodecanoic (lauric) acid in liver. In kidney, may play an important role in omega-hydroxylation of (5Z,8Z,11Z,14Z)-eicosatetraenoic acid (arachidonate) to 20-hydroxyeicosatetraenoic acid (20-HETE), a signaling molecule acting both as vasoconstrictive and natriuretic with overall effect on arterial blood pressure. Also participates in the formation of anti-inflammatory hydroxyepoxyeicosatrienoic acids (HEETs) in kidney by converting 8,9-epoxyeicosatrienoic acid (EET) to 20,8,9-HEET, an activator of PPARA. Displays substantially lower fatty acid omega-1 hydroxylase activity. Mechanistically, uses molecular oxygen inserting one oxygen atom into a substrate, and reducing the second into a water molecule, with two electrons provided by NADPH via cytochrome P450 reductase (CPR; NADPH-ferrihemoprotein reductase). In Rattus norvegicus (Rat), this protein is Cytochrome P450 4A10 (Cyp4a10).